The following is a 6061-amino-acid chain: Intermembrane lipid transfer protein vps13B (6061 aa).

The 114-residue stretch at 2 to 115 (FESLVADIIA…QLELKRKKLE (114 aa)) folds into the Chorein N-terminal domain. Disordered regions lie at residues 590–623 (PKYKRHQENKENKENQENQENENKNEINNNNNNK), 803–828 (DIKNSDNNNNNISDNINNNNNINNKN), 1386–1414 (QQQQQQEEEQQQKEEEQHGGEFDLQNVSS), 1604–1644 (SSNN…GTLS), 2747–2784 (QTNQNNQKNRNPFKFYDQSGASNNNNDNDNDEYDEDQE), 2950–2972 (GLNNSFDLNNSGGGNNNNNNSST), 3364–3401 (LNRNSNSDSDNEENHNNNQNNQNNIDDDDGDGDDDDDD), 3855–3876 (QQQQPIINGDYGGIDSNNRNKK), 4011–4068 (QQQQ…FKNN), 4107–4132 (ELEKKKRERKENSKSKSLVAPDRPDE), 4262–4297 (NSSNNNNNNNNNGLSASTSNNLNNTMNDSNNNYNGR), 4321–4442 (SQSI…TSPG), 4601–4631 (TSSPSSSSNKVNNNYNNMDDEEDKKISKKSL), 4753–4797 (NNNN…TQEF), 4861–4882 (NAGGSSHYSSNGSNGSFSSISQ), 5003–5030 (LATKGKDNNKDNSNNNNNNNNNNNDGIE), and 5372–5429 (NINN…IGQD). A compositionally biased stretch (basic and acidic residues) spans 595–614 (HQENKENKENQENQENENKN). The segment covering 1395–1406 (QQQKEEEQHGGE) has biased composition (basic and acidic residues). Residues 2747–2756 (QTNQNNQKNR) show a composition bias toward polar residues. The span at 2774–2784 (NDNDEYDEDQE) shows a compositional bias: acidic residues. The span at 3388 to 3401 (IDDDDGDGDDDDDD) shows a compositional bias: acidic residues. Residues 4015 to 4024 (QEKEKEIEKE) are compositionally biased toward basic and acidic residues. The span at 4031-4040 (LKNNNNISIN) shows a compositional bias: low complexity. Residues 4041-4057 (DNDDDDDDDDNDNDENN) are compositionally biased toward acidic residues. A compositionally biased stretch (low complexity) spans 4058–4068 (NENYEFNFKNN). The segment covering 4107–4120 (ELEKKKRERKENSK) has biased composition (basic and acidic residues). Composition is skewed to low complexity over residues 4330-4383 (TTTT…VGSN) and 4399-4429 (NNNNNNNNNNNNNNNNNNNNNNNNNNNNNNN). Over residues 4430–4441 (SNDNQVNFSTSP) the composition is skewed to polar residues. Low complexity-rich tracts occupy residues 4601–4617 (TSSPSSSSNKVNNNYNN) and 4753–4784 (NNNNNNNDVNNNNTNNNNNNNNNNNNNKSNEN). Residues 4785-4794 (SQDQPPSIKT) show a composition bias toward polar residues. Low complexity-rich tracts occupy residues 5013 to 5030 (DNSNNNNNNNNNNNDGIE) and 5372 to 5384 (NINNNNNNLNNDN). A compositionally biased stretch (basic and acidic residues) spans 5385 to 5409 (NKNKNNNDKNKNNDKNNKNNNDKNN). A compositionally biased stretch (low complexity) spans 5410-5421 (NDNNNNNNNNNN).

Belongs to the VPS13 family.

The protein resides in the membrane. Its function is as follows. Mediates the transfer of lipids between membranes at organelle contact sites. In Dictyostelium discoideum (Social amoeba), this protein is Intermembrane lipid transfer protein vps13B (vps13B).